The primary structure comprises 534 residues: Inorganic phosphate transporter 1-4 (534 aa).

Topologically, residues 1–24 are cytoplasmic; it reads MAREQLQVLNALDVAKTQWYHFTA. The helical transmembrane segment at 25–45 threads the bilayer; it reads IIIAGMGFFTDAYDLFCISLV. Topologically, residues 46–70 are extracellular; sequence TKLLGRIYYHVEGAQKPGTLPPNVA. Residues 71–91 traverse the membrane as a helical segment; sequence AAVNGVAFCGTLAGQLFFGWL. The Cytoplasmic segment spans residues 92-99; the sequence is GDKLGRKK. Residues 100-120 traverse the membrane as a helical segment; it reads VYGMTLMVMVLCSIASGLSFG. At 121–131 the chain is on the extracellular side; that stretch reads HEPKAVMATLC. The helical transmembrane segment at 132 to 152 threads the bilayer; the sequence is FFRFWLGFGIGGDYPLSATIM. The Cytoplasmic segment spans residues 153–161; sequence SEYANKKTR. A helical membrane pass occupies residues 162–182; that stretch reads GAFVSAVFAMQGFGIMAGGIF. Residues 183–211 lie on the Extracellular side of the membrane; that stretch reads AIIISSAFEAKFPSPAYADDALGSTIPQA. The helical transmembrane segment at 212-232 threads the bilayer; sequence DLVWRIILMAGAIPAAMTYYS. Over 233-293 the chain is Cytoplasmic; it reads RSKMPETARY…GLFSKEFMSR (61 aa). Residues 294–314 traverse the membrane as a helical segment; it reads HGLHLLGTTSTWFLLDIAFYS. Residues 315–349 are Extracellular-facing; sequence QNLFQKDIFSAIGWIPPAQSMNAIQEVFKIARAQT. Residues 350 to 370 form a helical membrane-spanning segment; it reads LIALCSTVPGYWFTVAFIDVI. At 371–372 the chain is on the cytoplasmic side; that stretch reads GR. Residues 373–393 form a helical membrane-spanning segment; that stretch reads FAIQMMGFFFMTVFMFALAIP. Residues 394 to 403 are Extracellular-facing; sequence YNHWTHKENR. A helical membrane pass occupies residues 404–424; the sequence is IGFVIMYSLTFFFANFGPNAT. Residues 425–442 lie on the Cytoplasmic side of the membrane; that stretch reads TFVVPAEIFPARFRSTCH. The helical transmembrane segment at 443 to 463 threads the bilayer; sequence GISAASGKLGAMVGAFGFLYL. Residues 464–484 are Extracellular-facing; sequence AQNPDKDKTDAGYPPGIGVRN. Residues 485 to 505 traverse the membrane as a helical segment; the sequence is SLIVLGVVNFLGILFTFLVPE. Over 506 to 534 the chain is Cytoplasmic; sequence SKGKSLEEMSGENEDNENSNNDSRTVPIV. The disordered stretch occupies residues 512–534; the sequence is EEMSGENEDNENSNNDSRTVPIV. 2 positions are modified to phosphoserine: Ser-524 and Ser-528.

The protein belongs to the major facilitator superfamily. Phosphate:H(+) symporter (TC 2.A.1.9) family. In terms of assembly, interacts with NLA. Post-translationally, ubiquitinated by NLA. Ubiquitination of PHT1-4 leads to its degradation by the proteasome. In terms of tissue distribution, mostly expressed in roots, in tissues connecting the lateral roots to the primary root. Also present in flowers, in senescing anther filaments and in the abscission zone at the base of siliques. Expressed in hydathodes and axillary buds, and in some senescing leaves. After Pi starvation, localized in all cells of undifferentiated root segments, including root tips and root hairs, and in the epidermis, cortex and stellar regions of mature root segments.

Its subcellular location is the cell membrane. In terms of biological role, high-affinity transporter for external inorganic phosphate. Acts as a H(+):phosphate symporter in both low- and high-Pi conditions. Confers sensitivity to arsenate. This chain is Inorganic phosphate transporter 1-4 (PHT1-4), found in Arabidopsis thaliana (Mouse-ear cress).